Here is a 417-residue protein sequence, read N- to C-terminus: Carboxypeptidase A2 (417 aa).

Positions 1–16 (MRLTPLLVALFGYIYC) are cleaved as a signal peptide. Positions 17 to 112 (QETFVGDQVL…EMLFNQQRER (96 aa)) are cleaved as a propeptide — activation peptide. The Peptidase M14 domain occupies 120 to 412 (AYHTLEEIYQ…LGLKTIMEHV (293 aa)). Residues H177 and E180 each coordinate Zn(2+). Residues 177–180 (HARE), R235, and 252–253 (NR) each bind substrate. C246 and C269 are disulfide-bonded. A Zn(2+)-binding site is contributed by H304. 305-306 (SY) contributes to the substrate binding site. An intrachain disulfide couples C318 to C352. Residue Y356 coordinates substrate. Residue E378 is the Proton donor/acceptor of the active site.

The protein belongs to the peptidase M14 family. The cofactor is Zn(2+).

It is found in the secreted. The enzyme catalyses Similar to that of carboxypeptidase A (EC 3.4.17.1), but with a preference for bulkier C-terminal residues.. Its function is as follows. Carboxypeptidase that catalyzes the release of a C-terminal amino acid, with a preference for large aromatic C-terminal residues. The sequence is that of Carboxypeptidase A2 (Cpa2) from Mus musculus (Mouse).